The primary structure comprises 65 residues: MSETITVNCPTCGKTVVWGEISPFRPFCSKRCQLIDLGEWAAEEKRIPSSGDLSESDDWSEEPKQ.

The Zn(2+) site is built by Cys-9, Cys-12, Cys-28, and Cys-32. The disordered stretch occupies residues 45–65 (KRIPSSGDLSESDDWSEEPKQ). Acidic residues predominate over residues 54–65 (SESDDWSEEPKQ).

It belongs to the DNA gyrase inhibitor YacG family. As to quaternary structure, interacts with GyrB. Requires Zn(2+) as cofactor.

Inhibits all the catalytic activities of DNA gyrase by preventing its interaction with DNA. Acts by binding directly to the C-terminal domain of GyrB, which probably disrupts DNA binding by the gyrase. This is DNA gyrase inhibitor YacG from Shigella boydii serotype 18 (strain CDC 3083-94 / BS512).